The primary structure comprises 175 residues: Anterior gradient protein 2 homolog (175 aa).

The signal sequence occupies residues 1–20 (MEKIPVSAFLLLVALSYTLA). The segment at 21-40 (RDTTVKPGAKKDTKDSRPKL) is required to promote cell adhesion. Short sequence motifs (homodimer stabilization; interchain) lie at residues 45–54 (SRGWGDQLIW) and 60–67 (EALYKSKT).

It belongs to the AGR family. In terms of assembly, monomer and homodimer. Interacts with LYPD3 and DAG1 (alphaDAG1). Interacts with MUC2; disulfide-linked. In terms of tissue distribution, expressed strongly in trachea, lung, stomach, colon, prostate and small intestine. Expressed weakly in pituitary gland, salivary gland, mammary gland, bladder, appendix, ovary, fetal lung, uterus, pancreas, kidney, fetal kidney, testis, placenta, thyroid gland and in estrogen receptor (ER)-positive breast cancer cell lines.

It localises to the secreted. Its subcellular location is the endoplasmic reticulum. In terms of biological role, required for MUC2 post-transcriptional synthesis and secretion. May play a role in the production of mucus by intestinal cells. Proto-oncogene that may play a role in cell migration, cell differentiation and cell growth. Promotes cell adhesion. This Homo sapiens (Human) protein is Anterior gradient protein 2 homolog (AGR2).